The chain runs to 341 residues: L-threonine 3-dehydrogenase (341 aa).

Cys-38 contacts Zn(2+). Active-site charge relay system residues include Thr-40 and His-43. Positions 63, 64, 93, 96, 99, and 107 each coordinate Zn(2+). NAD(+) contacts are provided by residues Ile-175, Asp-195, Arg-200, 262–264, and 286–287; these read LGI and IY.

The protein belongs to the zinc-containing alcohol dehydrogenase family. In terms of assembly, homotetramer. Requires Zn(2+) as cofactor.

The protein resides in the cytoplasm. It catalyses the reaction L-threonine + NAD(+) = (2S)-2-amino-3-oxobutanoate + NADH + H(+). Its pathway is amino-acid degradation; L-threonine degradation via oxydo-reductase pathway; glycine from L-threonine: step 1/2. Functionally, catalyzes the NAD(+)-dependent oxidation of L-threonine to 2-amino-3-ketobutyrate. In Salmonella typhi, this protein is L-threonine 3-dehydrogenase.